Here is a 412-residue protein sequence, read N- to C-terminus: Zinc finger protein 821 (412 aa).

The interval 26-83 is disordered; sequence RQAMMKTDFPGDLGSQRQAIQQLRDQDSSSSDSEGDEEETTQDEVSSHTSEEDGGVVK. Acidic residues predominate over residues 58 to 67; the sequence is SEGDEEETTQ. 2 consecutive C2H2-type zinc fingers follow at residues 116 to 140 and 150 to 172; these read GLCQ…VYQH and YMCP…LLIH. Residues 257-366 are a coiled coil; it reads KWALRRQNEP…EKMDMMLRAQ (110 aa). A disordered region spans residues 278–319; sequence RTAKKSRRDNETPEEREVRRMRDREAKRLQRMQETDEQRARR.

This sequence belongs to the krueppel C2H2-type zinc-finger protein family.

The protein localises to the nucleus. Its function is as follows. May be involved in transcriptional regulation. This is Zinc finger protein 821 (ZNF821) from Bos taurus (Bovine).